Consider the following 502-residue polypeptide: Serine carboxypeptidase-like 40 (502 aa).

Positions 1-24 (MRKGQGYSYSVIASVLVLLCVVVS) are cleaved as a signal peptide. N-linked (GlcNAc...) asparagine glycosylation is found at Asn103 and Asn187. Disulfide bonds link Cys136/Cys384, Cys293/Cys307, and Cys331/Cys352. Ser229 is an active-site residue. Residues Asn333 and Asn373 are each glycosylated (N-linked (GlcNAc...) asparagine). Asp420 is an active-site residue. Asn436 is a glycosylation site (N-linked (GlcNAc...) asparagine). His473 is a catalytic residue.

The protein belongs to the peptidase S10 family. In terms of tissue distribution, expressed in roots, leaves, flowers and siliques.

The protein localises to the secreted. Its function is as follows. Probable carboxypeptidase. This chain is Serine carboxypeptidase-like 40 (SCPL40), found in Arabidopsis thaliana (Mouse-ear cress).